Here is a 473-residue protein sequence, read N- to C-terminus: Ribulose bisphosphate carboxylase large chain 2 (473 aa).

Substrate contacts are provided by Asn-116 and Thr-166. Lys-168 functions as the Proton acceptor in the catalytic mechanism. Position 170 (Lys-170) interacts with substrate. Positions 194, 196, and 197 each coordinate Mg(2+). Lys-194 is modified (N6-carboxylysine). The Proton acceptor role is filled by His-287. 3 residues coordinate substrate: Arg-288, His-320, and Ser-372.

Belongs to the RuBisCO large chain family. Type I subfamily. In terms of assembly, heterohexadecamer of 8 large chains and 8 small chains. Mg(2+) is required as a cofactor.

It carries out the reaction 2 (2R)-3-phosphoglycerate + 2 H(+) = D-ribulose 1,5-bisphosphate + CO2 + H2O. The enzyme catalyses D-ribulose 1,5-bisphosphate + O2 = 2-phosphoglycolate + (2R)-3-phosphoglycerate + 2 H(+). Its function is as follows. RuBisCO catalyzes two reactions: the carboxylation of D-ribulose 1,5-bisphosphate, the primary event in carbon dioxide fixation, as well as the oxidative fragmentation of the pentose substrate. Both reactions occur simultaneously and in competition at the same active site. This Cereibacter sphaeroides (strain ATCC 17025 / ATH 2.4.3) (Rhodobacter sphaeroides) protein is Ribulose bisphosphate carboxylase large chain 2.